Reading from the N-terminus, the 86-residue chain is Small ribosomal subunit protein bS20 (86 aa).

A compositionally biased stretch (basic residues) spans 1–27 (MANIKSAKKRAVQSEKRRQHNASRRSM). Residues 1-28 (MANIKSAKKRAVQSEKRRQHNASRRSMM) are disordered.

Belongs to the bacterial ribosomal protein bS20 family.

In terms of biological role, binds directly to 16S ribosomal RNA. The sequence is that of Small ribosomal subunit protein bS20 from Proteus mirabilis (strain HI4320).